The following is a 288-amino-acid chain: Homoserine kinase (288 aa).

Position 79 to 89 (79 to 89) interacts with ATP; sequence PLARGLGSSSS.

It belongs to the GHMP kinase family. Homoserine kinase subfamily.

It is found in the cytoplasm. The catalysed reaction is L-homoserine + ATP = O-phospho-L-homoserine + ADP + H(+). The protein operates within amino-acid biosynthesis; L-threonine biosynthesis; L-threonine from L-aspartate: step 4/5. In terms of biological role, catalyzes the ATP-dependent phosphorylation of L-homoserine to L-homoserine phosphate. This is Homoserine kinase from Streptococcus sanguinis (strain SK36).